The following is a 281-amino-acid chain: MEMO1 family protein APE_1771 (281 aa).

Belongs to the MEMO1 family.

In Aeropyrum pernix (strain ATCC 700893 / DSM 11879 / JCM 9820 / NBRC 100138 / K1), this protein is MEMO1 family protein APE_1771.